The primary structure comprises 401 residues: Enolase (401 aa).

A (2R)-2-phosphoglycerate-binding site is contributed by Gln-154. Glu-196 (proton donor) is an active-site residue. Asp-232, Glu-275, and Asp-302 together coordinate Mg(2+). (2R)-2-phosphoglycerate is bound by residues Lys-327, Arg-356, Ser-357, and Lys-378. Residue Lys-327 is the Proton acceptor of the active site.

Belongs to the enolase family. It depends on Mg(2+) as a cofactor.

The protein localises to the cytoplasm. It localises to the secreted. Its subcellular location is the cell surface. It catalyses the reaction (2R)-2-phosphoglycerate = phosphoenolpyruvate + H2O. The protein operates within carbohydrate degradation; glycolysis; pyruvate from D-glyceraldehyde 3-phosphate: step 4/5. Its function is as follows. Catalyzes the reversible conversion of 2-phosphoglycerate (2-PG) into phosphoenolpyruvate (PEP). It is essential for the degradation of carbohydrates via glycolysis. In Haloquadratum walsbyi (strain DSM 16790 / HBSQ001), this protein is Enolase.